The sequence spans 258 residues: UPF0246 protein ABO_1338 (258 aa).

Belongs to the UPF0246 family.

The protein is UPF0246 protein ABO_1338 of Alcanivorax borkumensis (strain ATCC 700651 / DSM 11573 / NCIMB 13689 / SK2).